A 233-amino-acid chain; its full sequence is Ribosomal RNA small subunit methyltransferase G (233 aa).

The disordered stretch occupies residues 1-25 (MASRQSPMAVSQPDHADRSAALQLT). S-adenosyl-L-methionine-binding residues include Gly85, Phe90, and Arg155.

Belongs to the methyltransferase superfamily. RNA methyltransferase RsmG family.

It is found in the cytoplasm. The enzyme catalyses guanosine(527) in 16S rRNA + S-adenosyl-L-methionine = N(7)-methylguanosine(527) in 16S rRNA + S-adenosyl-L-homocysteine. Specifically methylates the N7 position of guanine in position 527 of 16S rRNA. This Rhodopseudomonas palustris (strain BisB5) protein is Ribosomal RNA small subunit methyltransferase G.